A 215-amino-acid polypeptide reads, in one-letter code: Thiamine import ATP-binding protein ThiQ (215 aa).

The ABC transporter domain occupies 2–215 (IYLNNVILND…GQISQLQKGV (214 aa)). 32-39 (GESGAGKS) lines the ATP pocket.

Belongs to the ABC transporter superfamily. Thiamine importer (TC 3.A.1.19.1) family. In terms of assembly, the complex is composed of two ATP-binding proteins (ThiQ), two transmembrane proteins (ThiP) and a solute-binding protein (ThiB).

The protein resides in the cell inner membrane. The catalysed reaction is thiamine(out) + ATP + H2O = thiamine(in) + ADP + phosphate + H(+). Functionally, part of the ABC transporter complex ThiBPQ involved in thiamine import. Responsible for energy coupling to the transport system. The polypeptide is Thiamine import ATP-binding protein ThiQ (Haemophilus influenzae (strain 86-028NP)).